A 296-amino-acid polypeptide reads, in one-letter code: GTP cyclohydrolase FolE2 (296 aa).

Belongs to the GTP cyclohydrolase IV family.

It catalyses the reaction GTP + H2O = 7,8-dihydroneopterin 3'-triphosphate + formate + H(+). It participates in cofactor biosynthesis; 7,8-dihydroneopterin triphosphate biosynthesis; 7,8-dihydroneopterin triphosphate from GTP: step 1/1. In terms of biological role, converts GTP to 7,8-dihydroneopterin triphosphate. This is GTP cyclohydrolase FolE2 from Delftia acidovorans (strain DSM 14801 / SPH-1).